A 1044-amino-acid polypeptide reads, in one-letter code: DEMETER-like protein 3 (1044 aa).

A compositionally biased stretch (polar residues) spans 1–15; sequence MLTDGSQHTYQNGET. The tract at residues 1-107 is disordered; sequence MLTDGSQHTY…KPRNPATTRL (107 aa). Residues 16 to 30 show a composition bias toward basic and acidic residues; the sequence is KNSKEHERKCDESAH. Residues 38–53 show a composition bias toward basic residues; the sequence is THKKKEKKNSKEKHGI. Residues 54–66 are compositionally biased toward basic and acidic residues; that stretch reads KHSESEHLQDDIS. Positions 71-89 are enriched in basic residues; sequence GKGRRRNSKGTPKKLRFNR. The segment at 348–445 is DEMETER; the sequence is KVNLDPETIK…AFMSVAAKFP (98 aa). Positions 678, 685, 688, and 694 each coordinate [4Fe-4S] cluster. The disordered stretch occupies residues 1024 to 1044; it reads VRRLHTPPDERGPKFMSDDDI.

Belongs to the DNA glycosylase family. DEMETER subfamily. Requires [4Fe-4S] cluster as cofactor.

It is found in the nucleus. Its function is as follows. Potential transcriptional activator that may act by nicking the target promoter. Catalyzes the release of 5-methylcytosine (5-meC) from DNA by a glycosylase/lyase mechanism. This chain is DEMETER-like protein 3 (DML3), found in Arabidopsis thaliana (Mouse-ear cress).